A 300-amino-acid chain; its full sequence is GTPase Era (300 aa).

The Era-type G domain occupies 8 to 176 (RCGYVAIVGR…EAQIAKHLPE (169 aa)). Residues 16–23 (GRPNVGKS) form a G1 region. 16–23 (GRPNVGKS) provides a ligand contact to GTP. The tract at residues 42 to 46 (QTTRH) is G2. The tract at residues 63–66 (DTPG) is G3. Residues 63-67 (DTPGM) and 125-128 (NKTD) each bind GTP. The tract at residues 125–128 (NKTD) is G4. The interval 155 to 157 (ISA) is G5. The KH type-2 domain occupies 199–283 (VREKIMRQLG…MLNLWVKVKG (85 aa)).

Belongs to the TRAFAC class TrmE-Era-EngA-EngB-Septin-like GTPase superfamily. Era GTPase family. In terms of assembly, monomer.

The protein localises to the cytoplasm. The protein resides in the cell inner membrane. An essential GTPase that binds both GDP and GTP, with rapid nucleotide exchange. Plays a role in 16S rRNA processing and 30S ribosomal subunit biogenesis and possibly also in cell cycle regulation and energy metabolism. The sequence is that of GTPase Era from Pseudomonas entomophila (strain L48).